The following is a 222-amino-acid chain: Small ribosomal subunit protein uS3 (222 aa).

Residues 39 to 108 (IRRHIKEKLY…TISLDIKEIK (70 aa)) enclose the KH type-2 domain.

The protein belongs to the universal ribosomal protein uS3 family. In terms of assembly, part of the 30S ribosomal subunit. Forms a tight complex with proteins S10 and S14.

Its function is as follows. Binds the lower part of the 30S subunit head. Binds mRNA in the 70S ribosome, positioning it for translation. In Caldicellulosiruptor bescii (strain ATCC BAA-1888 / DSM 6725 / KCTC 15123 / Z-1320) (Anaerocellum thermophilum), this protein is Small ribosomal subunit protein uS3.